Here is a 258-residue protein sequence, read N- to C-terminus: tRNA pseudouridine synthase A (258 aa).

Catalysis depends on D61, which acts as the Nucleophile. Substrate is bound at residue Y119.

Belongs to the tRNA pseudouridine synthase TruA family. Homodimer.

The catalysed reaction is uridine(38/39/40) in tRNA = pseudouridine(38/39/40) in tRNA. In terms of biological role, formation of pseudouridine at positions 38, 39 and 40 in the anticodon stem and loop of transfer RNAs. The polypeptide is tRNA pseudouridine synthase A (Chlorobium phaeobacteroides (strain DSM 266 / SMG 266 / 2430)).